Here is a 61-residue protein sequence, read N- to C-terminus: Large ribosomal subunit protein uL30 (61 aa).

This sequence belongs to the universal ribosomal protein uL30 family. Part of the 50S ribosomal subunit.

The protein is Large ribosomal subunit protein uL30 of Chromobacterium violaceum (strain ATCC 12472 / DSM 30191 / JCM 1249 / CCUG 213 / NBRC 12614 / NCIMB 9131 / NCTC 9757 / MK).